We begin with the raw amino-acid sequence, 738 residues long: 1,4-alpha-glucan branching enzyme GlgB (738 aa).

Aspartate 417 (nucleophile) is an active-site residue. The active-site Proton donor is glutamate 472.

The protein belongs to the glycosyl hydrolase 13 family. GlgB subfamily. In terms of assembly, monomer.

It carries out the reaction Transfers a segment of a (1-&gt;4)-alpha-D-glucan chain to a primary hydroxy group in a similar glucan chain.. It functions in the pathway glycan biosynthesis; glycogen biosynthesis. Catalyzes the formation of the alpha-1,6-glucosidic linkages in glycogen by scission of a 1,4-alpha-linked oligosaccharide from growing alpha-1,4-glucan chains and the subsequent attachment of the oligosaccharide to the alpha-1,6 position. The polypeptide is 1,4-alpha-glucan branching enzyme GlgB (Burkholderia pseudomallei (strain K96243)).